The chain runs to 273 residues: Phosphatidylglycerol--prolipoprotein diacylglyceryl transferase (273 aa).

Helical transmembrane passes span 19-39 (VHWY…LASY), 55-75 (LVFY…VLFY), 90-110 (VWTG…AMIL), 125-145 (FIAP…FIGA), 174-194 (PSQI…LWWF), 202-222 (MAVS…VEFF), and 230-250 (GFIL…MLLI). Arg138 is a binding site for a 1,2-diacyl-sn-glycero-3-phospho-(1'-sn-glycerol).

It belongs to the Lgt family.

It is found in the cell inner membrane. The enzyme catalyses L-cysteinyl-[prolipoprotein] + a 1,2-diacyl-sn-glycero-3-phospho-(1'-sn-glycerol) = an S-1,2-diacyl-sn-glyceryl-L-cysteinyl-[prolipoprotein] + sn-glycerol 1-phosphate + H(+). It participates in protein modification; lipoprotein biosynthesis (diacylglyceryl transfer). In terms of biological role, catalyzes the transfer of the diacylglyceryl group from phosphatidylglycerol to the sulfhydryl group of the N-terminal cysteine of a prolipoprotein, the first step in the formation of mature lipoproteins. This Acinetobacter baylyi (strain ATCC 33305 / BD413 / ADP1) protein is Phosphatidylglycerol--prolipoprotein diacylglyceryl transferase.